Reading from the N-terminus, the 37-residue chain is Natriuretic peptide PNP (37 aa).

C14 and C30 are disulfide-bonded.

In terms of tissue distribution, expressed by the venom gland.

Its subcellular location is the secreted. Increases urine flow and decreases blood pressure when administered to rats by intravenous injection. Inhibits thrombin-induced platelet aggregation. Stimulates cGMP production via the natriuretic peptide receptor-A (NPR1). This is Natriuretic peptide PNP from Pseudocerastes persicus (Persian horned viper).